A 389-amino-acid polypeptide reads, in one-letter code: Chalcone synthase (389 aa).

Cys-164 is a catalytic residue.

This sequence belongs to the thiolase-like superfamily. Chalcone/stilbene synthases family.

The catalysed reaction is (E)-4-coumaroyl-CoA + 3 malonyl-CoA + 3 H(+) = 2',4,4',6'-tetrahydroxychalcone + 3 CO2 + 4 CoA. Its pathway is secondary metabolite biosynthesis; flavonoid biosynthesis. The primary product of this enzyme is 4,2',4',6'-tetrahydroxychalcone (also termed naringenin-chalcone or chalcone) which can under specific conditions spontaneously isomerize into naringenin. The protein is Chalcone synthase (CHS) of Pueraria montana var. lobata (Kudzu vine).